Reading from the N-terminus, the 580-residue chain is MAAEDIAQLADCLAKANVGDGELSFKGKTLKLNTAQDAEEVIREIEEYEGLQALRLEGNTVGVEAAKAIAEVLQRKPDLKRCHWSDMFTGRLRPEIPTALRSLGDALITAGAQLTELDLSDNAFGPDGVRGFEALLKSPTCFTLQELKLNNCGMGIGGGKILAAALTECHKKSSAHGKPLALKVFIAGRNRLENDGATALSEAFRLIGTLEEVHMPQNGINHAGITALAESFKANSLLKVINLNDNTFTEKGGVAMAEALKTLRQVEVINFGDCLVRSKGAQAIASALKEGLHKLKDLNLSYCEIKADAAVSLAESVEDKSDLEKLDLNGNCLGEEGCEQVQEILESINMANILGSLSDDEDEDDDDDDEDDDDDEDDENDDEEVEEEEEEVEEEEGGDNENKEKSKEIPCLSGSAPASPPKLPVDASTFLSFPSPEKLVRMGPRRSAMIAQQVNVADTEKVVQAFIQVSSVYREDGEIKAAVEETIDGLMKEAFENRGFQANVFITSLLVQMGLLKSEDKMKTIPHLNGPLLTLNHMVQQNYFPKSLASTLLAFISKPNGVLENNASARHTLLCNLHNL.

LRR repeat units follow at residues 48–71 (YEGL…AIAE), 111–134 (GAQL…GFEA), 141–168 (CFTL…ALTE), 207–230 (IGTL…ALAE), 235–258 (NSLL…AMAE), 292–315 (LHKL…SLAE), and 320–343 (KSDL…QVQE). The interval 356–429 (SLSDDEDEDD…PPKLPVDAST (74 aa)) is disordered. The segment covering 358-399 (SDDEDEDDDDDDEDDDDDEDDENDDEEVEEEEEEVEEEEGGD) has biased composition (acidic residues).

It belongs to the RNA1 family. Homodimer. Identified in a complex with RANBP2 and the ubiquitin-conjugating enzyme E2 (UBE2I). Post-translationally, may be sumoylated.

The protein resides in the cytoplasm. It localises to the nucleus. It is found in the nucleoplasm. Its subcellular location is the nucleus envelope. The protein localises to the chromosome. The protein resides in the centromere. It localises to the kinetochore. It is found in the cytoskeleton. Its subcellular location is the spindle. GTPase activator for RAN, converting it to the GDP-bound state. Converts cytoplasmic GTP-bound RAN to GDP-bound RAN, which is required for RAN-mediated nuclear import and export. In Xenopus laevis (African clawed frog), this protein is Ran GTPase-activating protein 1 (rangap1).